We begin with the raw amino-acid sequence, 88 residues long: Small ribosomal subunit protein bS20 (88 aa).

Positions 1–22 are disordered; it reads MANTPSAKKAVNKIAKRTQVNK.

Belongs to the bacterial ribosomal protein bS20 family.

Its function is as follows. Binds directly to 16S ribosomal RNA. The protein is Small ribosomal subunit protein bS20 of Bartonella bacilliformis (strain ATCC 35685 / KC583 / Herrer 020/F12,63).